Reading from the N-terminus, the 139-residue chain is Large ribosomal subunit protein uL16c (139 aa).

Over residues Met-1–Met-17 the composition is skewed to basic residues. The segment at Met-1–Lys-23 is disordered.

It belongs to the universal ribosomal protein uL16 family. In terms of assembly, part of the 50S ribosomal subunit.

It is found in the plastid. It localises to the chloroplast. The chain is Large ribosomal subunit protein uL16c from Porphyra purpurea (Red seaweed).